The chain runs to 164 residues: Protein SprT (164 aa).

The SprT-like domain occupies 13–156; sequence YQQAEAFFKR…LCKRCREILV (144 aa). His-69 lines the Zn(2+) pocket. The active site involves Glu-70. His-73 contacts Zn(2+).

It belongs to the SprT family. Zn(2+) serves as cofactor.

The protein localises to the cytoplasm. The protein is Protein SprT of Pseudomonas putida (strain ATCC 700007 / DSM 6899 / JCM 31910 / BCRC 17059 / LMG 24140 / F1).